The chain runs to 325 residues: Cytosolic Fe-S cluster assembly factor Nubp1 homolog (325 aa).

The tract at residues 1–26 (MSSGADVPSDAPAHCPGTQSDDAGKA) is disordered. Residues Cys-15, Cys-29, Cys-32, and Cys-38 each coordinate [4Fe-4S] cluster. 68-75 (GKGGVGKS) contacts ATP. The [4Fe-4S] cluster site is built by Cys-243 and Cys-246.

Belongs to the Mrp/NBP35 ATP-binding proteins family. NUBP1/NBP35 subfamily. Heterotetramer of 2 Nubp1 and 2 Nubp2 chains. The cofactor is [4Fe-4S] cluster.

Its subcellular location is the cytoplasm. Component of the cytosolic iron-sulfur (Fe/S) protein assembly (CIA) machinery. Required for maturation of extramitochondrial Fe-S proteins. The Nubp1-Nubp2 heterotetramer forms a Fe-S scaffold complex, mediating the de novo assembly of an Fe-S cluster and its transfer to target apoproteins. This Anopheles gambiae (African malaria mosquito) protein is Cytosolic Fe-S cluster assembly factor Nubp1 homolog.